The primary structure comprises 338 residues: Fructose-1,6-bisphosphatase class 1 1 (338 aa).

Mg(2+) is bound by residues Glu-88, Asp-107, Leu-109, and Asp-110. Substrate contacts are provided by residues 110–113 and Asn-196; that span reads DGSS. Residue Glu-268 participates in Mg(2+) binding.

The protein belongs to the FBPase class 1 family. Homotetramer. Mg(2+) serves as cofactor.

It localises to the cytoplasm. The catalysed reaction is beta-D-fructose 1,6-bisphosphate + H2O = beta-D-fructose 6-phosphate + phosphate. The protein operates within carbohydrate biosynthesis; Calvin cycle. This chain is Fructose-1,6-bisphosphatase class 1 1, found in Bradyrhizobium sp. (strain BTAi1 / ATCC BAA-1182).